Consider the following 327-residue polypeptide: Polyprenyl transferase andD (327 aa).

The next 8 membrane-spanning stretches (helical) occupy residues 49–69, 81–101, 140–160, 174–194, 201–221, 244–264, 271–291, and 307–327; these read LGYI…ASIA, ITLL…WDDI, FAFV…MLFF, PQLI…GLNL, IPMA…DIIY, CLDA…VIAG, APFF…LAMA, and CCTS…VWRS.

It belongs to the UbiA prenyltransferase family. The cofactor is Mg(2+).

The protein resides in the membrane. It participates in secondary metabolite biosynthesis; terpenoid biosynthesis. Polyprenyl transferase; part of the gene cluster that mediates the biosynthesis of anditomin, a fungal meroterpenoid. The first step of the pathway is the synthesis of 3,5-dimethylorsellinic acid (DMOA) by the polyketide synthase andM. DMOA is then converted to the phthalide compound 5,7-dihydroxy-4,6-dimethylphthalide (DHDMP) by the cytochrome P450 monooxygenase andK, which is further prenylated by the prenyltransferase andD to yield farnesyl-DHDMP. Further epoxidation by the FAD-dependent monooxygenase andE leads to epoxyfarnesyl-DHDMP. The next step involves the terpene cyclase andB that converts epoxyfarnesyl-DHDMP into preandiloid A through opening of the epoxide ring followed by the cyclization of the farnesyl moiety. Preandiloid A is in turn oxidized at the C-3 hydroxyl group to yield preandiloid B by the dehydrogenase andC. The dioxygenase andA is solely responsible for the dehydrogenation of preandiloid B leading to the enone preandiloid C, as well as for the intriguing structural rearrangement to generate the bicyclo[2.2.2]octane core, transforming preandiloid C into andiconin. FAD-binding monooxygenase andJ then produces andilesin D which is reduced by dehydrogenase andI to yield andilesin A. Action of acetyltransferase andG followed by a spontaneous acetate elimination leads then to andilesin B, which is in turn substrate of the short chain dehydrogenase andH to yield andilesin C. Finally, the dioxygenase andF catalyzes the transformation of andilesin C to anditomin. This chain is Polyprenyl transferase andD, found in Emericella variicolor (Aspergillus stellatus).